The primary structure comprises 158 residues: Protein Smg homolog (158 aa).

Belongs to the Smg family.

This Vibrio cholerae serotype O1 (strain ATCC 39315 / El Tor Inaba N16961) protein is Protein Smg homolog.